The following is a 2128-amino-acid chain: Non-reducing polyketide synthase albA (2128 aa).

Positions 8-244 (YLFGDQTSDI…VKAPIHGPYH (237 aa)) are N-terminal acylcarrier protein transacylase domain (SAT). The Ketosynthase family 3 (KS3) domain maps to 375–806 (NSKIAIIGMS…GGNTALLLED (432 aa)). Catalysis depends on for beta-ketoacyl synthase activity residues cysteine 547, histidine 682, and histidine 724. The malonyl-CoA:ACP transacylase (MAT) domain stretch occupies residues 912-1232 (FVFTGQGAQY…LASLHLAGID (321 aa)). Serine 1001 serves as the catalytic For acyl/malonyl transferase activity. The N-terminal hotdog fold stretch occupies residues 1286–1425 (HEYLTTAAQK…CTVRFFDCAA (140 aa)). The PKS/mFAS DH domain occupies 1286-1598 (HEYLTTAAQK…FQALSRKILD (313 aa)). Positions 1290–1603 (TTAAQKVIET…RKILDTVLPP (314 aa)) are product template (PT) domain. The active-site Proton acceptor; for dehydratase activity is histidine 1326. Residues 1452–1598 (DAHRLGRGMV…FQALSRKILD (147 aa)) are C-terminal hotdog fold. The active-site Proton donor; for dehydratase activity is the aspartate 1511. Residues 1618–1695 (PSAPSLVKRA…DFKQFLAPMS (78 aa)) enclose the Carrier 1 domain. Serine 1655 is modified (O-(pantetheine 4'-phosphoryl)serine). Positions 1695-1740 (SQGEASDGSTSDPESSSSFNGGSSTDESSAGSPVSSPPNEKVTQVE) are disordered. Residues 1700–1723 (SDGSTSDPESSSSFNGGSSTDESS) show a composition bias toward low complexity. Residues 1724–1740 (AGSPVSSPPNEKVTQVE) show a composition bias toward polar residues. The 78-residue stretch at 1739–1816 (VEQHATIKEI…DVEDALGLKP (78 aa)) folds into the Carrier 2 domain. Serine 1776 is subject to O-(pantetheine 4'-phosphoryl)serine. Positions 1854 to 2126 (SPHPRSTSIL…ELGSFIGNAM (273 aa)) are claisen cyclase domain. Serine 1944 functions as the For Claisen cyclase activity in the catalytic mechanism.

The catalysed reaction is 6 malonyl-CoA + acetyl-CoA + 6 H(+) = naphtopyrone YWA1 + 6 CO2 + 7 CoA + H2O. It functions in the pathway secondary metabolite biosynthesis. In terms of biological role, non-reducing polyketide synthase; part of the gene cluster that mediates the biosynthesis of aurasperone B, a dimeric gamma-naphthopyrone. The first step in the biosynthesis of aurasperone B is the production of gamma-naphthopyrone precursor YWA1 by the non-reducing polyketide synthase albA, via condensation of one acetyl-CoA starter unit with 6 malonyl-CoA units. YWA1 is then methylated by aunE at position C-6 to yield foncesin which is further methylated at position C-8 by aunD to produce fonsecin B. A key enzyme in the biosynthetic pathway is the cytochrome P450 monooxygenase aunB which catalyzes the oxidative dimerization of fonsecin B to aurasperone B. AunB also catalyzes the oxidative dimerization of rubrofusarin B into aurasperone A. This Aspergillus niger (strain ATCC 1015 / CBS 113.46 / FGSC A1144 / LSHB Ac4 / NCTC 3858a / NRRL 328 / USDA 3528.7) protein is Non-reducing polyketide synthase albA.